Consider the following 636-residue polypeptide: Amylosucrase (636 aa).

Asp152, His195, Gln262, and Arg292 together coordinate substrate. The Nucleophile role is filled by Asp294. Glu336 serves as the catalytic Proton donor. Substrate-binding residues include His400, Asp401, and Arg517.

The protein belongs to the glycosyl hydrolase 13 family. Monomer.

Its subcellular location is the secreted. The enzyme catalyses [(1-&gt;4)-alpha-D-glucosyl](n) + sucrose = [(1-&gt;4)-alpha-D-glucosyl](n+1) + D-fructose. With respect to regulation, amylosucrase favors hydrolysis at low sucrose concentrations, and polymerization at high sucrose concentrations. Competitively inhibited by fructose. Functionally, catalyzes the synthesis of alpha-glucan from sucrose. Catalyzes, in addition, sucrose hydrolysis, maltose and maltotriose synthesis by successive transfers of the glucosyl moiety of sucrose onto the released glucose, and finally turanose and trehalulose synthesis, these two sucrose isomers being obtained by glucosyl transfer onto fructose. This chain is Amylosucrase (ams), found in Neisseria polysaccharea.